Here is a 598-residue protein sequence, read N- to C-terminus: Trichothecene efflux pump TRI12 (598 aa).

Residues 42–62 (IVASFAAFSMNVVATYFVLQA) form a helical membrane-spanning segment. N-linked (GlcNAc...) asparagine glycosylation occurs at Asn-79. 2 consecutive transmembrane segments (helical) span residues 109 to 129 (PFVI…CTAT) and 135 to 155 (LAAM…PLFI). Asn-161 is a glycosylation site (N-linked (GlcNAc...) asparagine). The next 10 membrane-spanning stretches (helical) occupy residues 165–185 (FLGL…SPYL), 197–217 (WIFY…IIWY), 241–261 (WIGI…VSWG), 273–293 (VIGL…YEVY), 312–332 (FVCI…LVIM), 356–376 (ATAS…FHLV), 381–401 (WQIL…SSIN), 409–429 (IALS…TMLL), 442–462 (AFAV…AAFI), and 533–553 (ANVY…SLCM). Positions 579–598 (LEGNSESQPSPIILSMADKE) are disordered.

The protein belongs to the major facilitator superfamily.

The protein resides in the cell membrane. In terms of biological role, efflux pump that provides the dual role of trichothecene export and self-protection by allowing the fungus to evade the harmful effect of its own trichothecene production. The chain is Trichothecene efflux pump TRI12 from Fusarium sporotrichioides.